We begin with the raw amino-acid sequence, 526 residues long: Probable feruloyl esterase B (526 aa).

The first 18 residues, 1 to 18 (MARLSLLTLLALGSAALA), serve as a signal peptide directing secretion. Disulfide bonds link Cys27-Cys74 and Cys62-Cys113. A glycan (N-linked (GlcNAc...) asparagine) is linked at Asn137. 4 disulfides stabilise this stretch: Cys186/Cys441, Cys255/Cys272, Cys281/Cys291, and Cys503/Cys525. Ser187 acts as the Acyl-ester intermediate in catalysis. A glycan (N-linked (GlcNAc...) asparagine) is linked at Asn233. Ca(2+) is bound by residues Asp256, Asp259, Ala261, Asp263, and Ile265. An N-linked (GlcNAc...) asparagine glycan is attached at Asn311. Residues Asp400 and His440 each act as charge relay system in the active site. N-linked (GlcNAc...) asparagine glycosylation is present at Asn516.

Belongs to the tannase family.

It localises to the secreted. The enzyme catalyses feruloyl-polysaccharide + H2O = ferulate + polysaccharide.. In terms of biological role, involved in degradation of plant cell walls. Hydrolyzes the feruloyl-arabinose ester bond in arabinoxylans as well as the feruloyl-galactose and feruloyl-arabinose ester bonds in pectin. The sequence is that of Probable feruloyl esterase B (faeB) from Aspergillus clavatus (strain ATCC 1007 / CBS 513.65 / DSM 816 / NCTC 3887 / NRRL 1 / QM 1276 / 107).